A 258-amino-acid polypeptide reads, in one-letter code: Synaptosomal-associated protein 29 (258 aa).

Positions 1 to 41 are disordered; sequence MSAYPKSYNPFDDDGEDEGARPAPWRDARDLPDGPDAPADR. The segment covering 18–32 has biased composition (basic and acidic residues); sequence EGARPAPWRDARDLP. Residues 76–107 adopt a coiled-coil conformation; it reads ASSEELARQRGVLERTEKMVDKMDQDLKISQK. Phosphoserine occurs at positions 77, 78, and 114. A disordered region spans residues 127–190; that stretch reads PVETPPEQNG…GSAVSTDAYP (64 aa). A phosphothreonine mark is found at threonine 130 and threonine 137. The segment covering 132–144 has biased composition (polar residues); sequence PEQNGTLASQPNS. Serine 163, serine 182, serine 185, serine 204, and serine 210 each carry phosphoserine. In terms of domain architecture, t-SNARE coiled-coil homology spans 196–258; that stretch reads QAYHQKIDSN…KSTERKVRQL (63 aa).

Belongs to the SNAP-25 family. Forms a SNARE complex, composed of VAMP8, SNAP29 and STX17, involved in fusion of autophagosome with lysosome. Interacts with multiple syntaxins including STX6. Interacts with EIPR1. Interacts with STX17; this interaction is increased in the absence of TMEM39A.

It is found in the cytoplasm. The protein resides in the golgi apparatus membrane. The protein localises to the cytoplasmic vesicle. Its subcellular location is the autophagosome membrane. It localises to the cell projection. It is found in the cilium membrane. In terms of biological role, SNAREs, soluble N-ethylmaleimide-sensitive factor-attachment protein receptors, are essential proteins for fusion of cellular membranes. SNAREs localized on opposing membranes assemble to form a trans-SNARE complex, an extended, parallel four alpha-helical bundle that drives membrane fusion. SNAP29 is a SNARE involved in autophagy through the direct control of autophagosome membrane fusion with the lysososome membrane. Also plays a role in ciliogenesis by regulating membrane fusions. This is Synaptosomal-associated protein 29 from Pongo abelii (Sumatran orangutan).